The chain runs to 117 residues: Prefoldin subunit beta (117 aa).

This sequence belongs to the prefoldin subunit beta family. Heterohexamer of two alpha and four beta subunits.

The protein resides in the cytoplasm. In terms of biological role, molecular chaperone capable of stabilizing a range of proteins. Seems to fulfill an ATP-independent, HSP70-like function in archaeal de novo protein folding. This chain is Prefoldin subunit beta, found in Pyrococcus furiosus (strain ATCC 43587 / DSM 3638 / JCM 8422 / Vc1).